The sequence spans 708 residues: Otogelin-like protein (708 aa).

Positions 1 to 113 (KIIVNRLARK…SWEIEKSFEV (113 aa)) constitute a VWFD domain. N-linked (GlcNAc...) asparagine glycosylation is present at Asn553. 4 disulfides stabilise this stretch: Cys616–Cys672, Cys637–Cys686, Cys648–Cys703, and Cys652–Cys705. The region spanning 616–708 (CKREERICQK…EPIDCTCQWN (93 aa)) is the CTCK domain.

The protein belongs to the otogelin family.

It localises to the secreted. This chain is Otogelin-like protein (OTOGL), found in Pongo abelii (Sumatran orangutan).